Here is a 68-residue protein sequence, read N- to C-terminus: Conotoxin VnMMSK-01 (68 aa).

A signal peptide spans 1 to 20 (MMSKLGVLLTICLLLFPLTA). Residues 21 to 50 (VPMDGDQPADLPALRTQDFEPERSPWFDPV) constitute a propeptide that is removed on maturation. 3 disulfide bridges follow: C53-C65, C54-C61, and C58-C64. Residue P63 is modified to 4-hydroxyproline.

It belongs to the conotoxin M superfamily. Expressed by the venom duct.

It localises to the secreted. This is Conotoxin VnMMSK-01 from Conus ventricosus (Mediterranean cone).